An 882-amino-acid chain; its full sequence is Translation initiation factor IF-2 (882 aa).

Disordered regions lie at residues 95 to 176 and 229 to 289; these read PSVT…ASSL and EHAR…SALQ. Over residues 116–133 the composition is skewed to polar residues; that stretch reads TKNTFSQESLNKTSPQKS. 2 stretches are compositionally biased toward basic and acidic residues: residues 137–172 and 229–246; these read KAIEKAKIESPKKERHSLKEKQKKEAQSEKARREAE and EHARAAEDENDAKVEGDR. Basic residues predominate over residues 247–262; that stretch reads RSRHRGTKTTKQKKTN. A compositionally biased stretch (basic and acidic residues) spans 263–276; it reads KLSESKTDREEARA. A tr-type G domain is found at 382–551; the sequence is HRAPVVTIMG…LLQAEVLELK (170 aa). The interval 391 to 398 is G1; it reads GHVDHGKT. GTP is bound at residue 391–398; it reads GHVDHGKT. The tract at residues 416 to 420 is G2; that stretch reads GITQH. The segment at 437–440 is G3; that stretch reads DTPG. GTP-binding positions include 437-441 and 491-494; these read DTPGH and NKID. Residues 491–494 form a G4 region; it reads NKID. The interval 527–529 is G5; that stretch reads SAK.

This sequence belongs to the TRAFAC class translation factor GTPase superfamily. Classic translation factor GTPase family. IF-2 subfamily.

The protein localises to the cytoplasm. In terms of biological role, one of the essential components for the initiation of protein synthesis. Protects formylmethionyl-tRNA from spontaneous hydrolysis and promotes its binding to the 30S ribosomal subunits. Also involved in the hydrolysis of GTP during the formation of the 70S ribosomal complex. This chain is Translation initiation factor IF-2, found in Hamiltonella defensa subsp. Acyrthosiphon pisum (strain 5AT).